Here is a 1974-residue protein sequence, read N- to C-terminus: Protein Ycf2 (1974 aa).

The segment at 219–246 (SQLKGSSYQSRDHLDSISNEDSEYHNQR) is disordered. 1308 to 1315 (GSIGTGRS) is an ATP binding site.

The protein belongs to the Ycf2 family.

It is found in the plastid. The protein resides in the chloroplast stroma. Functionally, probable ATPase of unknown function. Its presence in a non-photosynthetic plant (Epifagus virginiana) and experiments in tobacco indicate that it has an essential function which is probably not related to photosynthesis. The chain is Protein Ycf2 from Jasminum nudiflorum (Winter jasmine).